The sequence spans 84 residues: Small ribosomal subunit protein bS20 (84 aa).

This sequence belongs to the bacterial ribosomal protein bS20 family.

Functionally, binds directly to 16S ribosomal RNA. This chain is Small ribosomal subunit protein bS20, found in Latilactobacillus sakei subsp. sakei (strain 23K) (Lactobacillus sakei subsp. sakei).